Consider the following 256-residue polypeptide: 5-keto-4-deoxy-D-glucarate aldolase (256 aa).

H50 (proton acceptor) is an active-site residue. Residue Q151 coordinates substrate. E153 contacts Mg(2+). 2 residues coordinate substrate: S178 and D179. D179 contacts Mg(2+).

This sequence belongs to the HpcH/HpaI aldolase family. KDGluc aldolase subfamily. As to quaternary structure, homohexamer; trimer of dimers. It depends on Mg(2+) as a cofactor.

The enzyme catalyses 5-dehydro-4-deoxy-D-glucarate = 2-hydroxy-3-oxopropanoate + pyruvate. The catalysed reaction is 2-dehydro-3-deoxy-D-glucarate = 2-hydroxy-3-oxopropanoate + pyruvate. Its pathway is carbohydrate acid metabolism; galactarate degradation; D-glycerate from galactarate: step 2/3. Functionally, catalyzes the reversible retro-aldol cleavage of both 5-keto-4-deoxy-D-glucarate and 2-keto-3-deoxy-D-glucarate to pyruvate and tartronic semialdehyde. The polypeptide is 5-keto-4-deoxy-D-glucarate aldolase (Escherichia coli (strain K12 / DH10B)).